The primary structure comprises 108 residues: Large ribosomal subunit protein uL24 (108 aa).

The protein belongs to the universal ribosomal protein uL24 family. As to quaternary structure, part of the 50S ribosomal subunit.

Its function is as follows. One of two assembly initiator proteins, it binds directly to the 5'-end of the 23S rRNA, where it nucleates assembly of the 50S subunit. One of the proteins that surrounds the polypeptide exit tunnel on the outside of the subunit. In Mycoplasma mycoides subsp. mycoides SC (strain CCUG 32753 / NCTC 10114 / PG1), this protein is Large ribosomal subunit protein uL24.